We begin with the raw amino-acid sequence, 1027 residues long: Pro-apoptotic serine protease nma111 (1027 aa).

Residues 1–46 (MDLNGDAGAKRKRSSIVPAERPAKHLKPESSALTPGDSTPANGTVY) form a disordered region. A compositionally biased stretch (polar residues) spans 31–42 (SALTPGDSTPAN). Residues 81 to 265 (VVSIHFCQTC…AATDYFLPLD (185 aa)) are serine protease. Residues His119, Asp150, and Ser232 each act as charge relay system in the active site. PDZ domains lie at 288-373 (QWIL…LLVQ) and 875-956 (VFCG…VTFD). The tract at residues 991–1027 (HNKSKHKDGIAPDAANLNPDAMEQGYDGASDIEPEAE) is disordered.

This sequence belongs to the peptidase S1C family.

Its subcellular location is the nucleus. Its function is as follows. Nuclear serine protease which mediates apoptosis. The sequence is that of Pro-apoptotic serine protease nma111 (nma111) from Aspergillus oryzae (strain ATCC 42149 / RIB 40) (Yellow koji mold).